The sequence spans 189 residues: Transcription factor FapR (189 aa).

Belongs to the FapR family.

In terms of biological role, transcriptional factor involved in regulation of membrane lipid biosynthesis by repressing genes involved in fatty acid and phospholipid metabolism. In Listeria welshimeri serovar 6b (strain ATCC 35897 / DSM 20650 / CCUG 15529 / CIP 8149 / NCTC 11857 / SLCC 5334 / V8), this protein is Transcription factor FapR.